Consider the following 129-residue polypeptide: V-type proton ATPase subunit F 2 (129 aa).

It belongs to the V-ATPase F subunit family. In terms of assembly, V-ATPase is a heteromultimeric enzyme made up of two complexes: the ATP-hydrolytic V1 complex and the proton translocation V0 complex. The V1 complex consists of three catalytic AB heterodimers that form a heterohexamer, three peripheral stalks each consisting of EG heterodimers, one central rotor including subunits D and F, and the regulatory subunits C and H. The proton translocation complex V0 consists of the proton transport subunit a, a ring of proteolipid subunits c9c'', rotary subunit d, subunits e and f, and the accessory subunits VhaAC45 and ATP6AP2.

In terms of biological role, subunit of the V1 complex of vacuolar(H+)-ATPase (V-ATPase), a multisubunit enzyme composed of a peripheral complex (V1) that hydrolyzes ATP and a membrane integral complex (V0) that translocates protons. V-ATPase is responsible for acidifying and maintaining the pH of intracellular compartments and in some cell types, is targeted to the plasma membrane, where it is responsible for acidifying the extracellular environment. The sequence is that of V-type proton ATPase subunit F 2 (Vha14-2) from Drosophila melanogaster (Fruit fly).